A 400-amino-acid chain; its full sequence is tRNA(Met) cytidine acetate ligase (400 aa).

Residues 7 to 20 (IVEYNPFHNGHLYH), Gly-101, Asn-159, and 184 to 185 (RI) each bind ATP.

Belongs to the TmcAL family.

It localises to the cytoplasm. The catalysed reaction is cytidine(34) in elongator tRNA(Met) + acetate + ATP = N(4)-acetylcytidine(34) in elongator tRNA(Met) + AMP + diphosphate. In terms of biological role, catalyzes the formation of N(4)-acetylcytidine (ac(4)C) at the wobble position of elongator tRNA(Met), using acetate and ATP as substrates. First activates an acetate ion to form acetyladenylate (Ac-AMP) and then transfers the acetyl group to tRNA to form ac(4)C34. This is tRNA(Met) cytidine acetate ligase from Caldicellulosiruptor bescii (strain ATCC BAA-1888 / DSM 6725 / KCTC 15123 / Z-1320) (Anaerocellum thermophilum).